Consider the following 293-residue polypeptide: Acetyl-coenzyme A carboxylase carboxyl transferase subunit beta (293 aa).

The region spanning 29–293 (LWVKCSECSQ…GVKELAEANT (265 aa)) is the CoA carboxyltransferase N-terminal domain. 4 residues coordinate Zn(2+): Cys-33, Cys-36, Cys-52, and Cys-55. The C4-type zinc finger occupies 33–55 (CSECSQVAYRKDLISNFNVCNNC).

Belongs to the AccD/PCCB family. Acetyl-CoA carboxylase is a heterohexamer composed of biotin carboxyl carrier protein (AccB), biotin carboxylase (AccC) and two subunits each of ACCase subunit alpha (AccA) and ACCase subunit beta (AccD). Requires Zn(2+) as cofactor.

The protein resides in the cytoplasm. The enzyme catalyses N(6)-carboxybiotinyl-L-lysyl-[protein] + acetyl-CoA = N(6)-biotinyl-L-lysyl-[protein] + malonyl-CoA. Its pathway is lipid metabolism; malonyl-CoA biosynthesis; malonyl-CoA from acetyl-CoA: step 1/1. Its function is as follows. Component of the acetyl coenzyme A carboxylase (ACC) complex. Biotin carboxylase (BC) catalyzes the carboxylation of biotin on its carrier protein (BCCP) and then the CO(2) group is transferred by the transcarboxylase to acetyl-CoA to form malonyl-CoA. This chain is Acetyl-coenzyme A carboxylase carboxyl transferase subunit beta, found in Prochlorococcus marinus (strain AS9601).